Reading from the N-terminus, the 622-residue chain is Low affinity potassium transport system protein Kup (622 aa).

12 helical membrane-spanning segments follow: residues Leu9–Leu29, Val49–Leu69, Val103–Ile123, Pro137–Ile157, Val165–Leu185, Val213–Ala233, Trp247–Leu267, Pro276–Ala296, Ile337–Phe357, Leu363–Thr383, Phe396–Leu416, and Leu419–Thr439.

It belongs to the HAK/KUP transporter (TC 2.A.72) family.

It is found in the cell inner membrane. The enzyme catalyses K(+)(in) + H(+)(in) = K(+)(out) + H(+)(out). Responsible for the low-affinity transport of potassium into the cell. Likely operates as a K(+):H(+) symporter. This chain is Low affinity potassium transport system protein Kup, found in Escherichia coli O157:H7 (strain EC4115 / EHEC).